We begin with the raw amino-acid sequence, 258 residues long: Peptidase inhibitor 15 (258 aa).

Positions 1 to 19 (MIAISAVSSALLFSLLCEA) are cleaved as a signal peptide. Residues 20 to 60 (STVVLLNSTDSSPPTNNFTDIEAALKAQLDSADIPKARRKR) constitute a propeptide that is removed on maturation. N-linked (GlcNAc...) asparagine glycosylation is found at Asn26, Asn36, and Asn124. An SCP domain is found at 71–211 (LDYHNQVRGK…RRAVYLVCNY (141 aa)).

The protein belongs to the CRISP family. N-glycosylated. Weakly expressed. Expressed at low level in prostate, mammary gland, salivary gland and thyroid gland.

The protein resides in the secreted. Serine protease inhibitor which displays weak inhibitory activity against trypsin. May play a role in facial patterning during embryonic development. In Homo sapiens (Human), this protein is Peptidase inhibitor 15 (PI15).